The sequence spans 414 residues: Esterase FrsA (414 aa).

It belongs to the FrsA family.

It catalyses the reaction a carboxylic ester + H2O = an alcohol + a carboxylate + H(+). Catalyzes the hydrolysis of esters. The protein is Esterase FrsA of Escherichia coli O127:H6 (strain E2348/69 / EPEC).